The primary structure comprises 375 residues: Proton-coupled zinc antiporter SLC30A8 (375 aa).

The Cytoplasmic portion of the chain corresponds to 1–68 (MKGPEKAYLV…QREQTSAKKK (68 aa)). His46, Cys47, and His48 together coordinate Zn(2+). The HCH Motif; seals regulatory zinc-binding pocket signature appears at 46 to 48 (HCH). Residues 69–89 (LCIASLICFVFISAEIVGGYI) traverse the membrane as a helical segment. Topologically, residues 90–98 (AGSLAVVTD) are lumenal, vesicle. The helical transmembrane segment at 99 to 119 (AAHLLVDLSSFFISLGSLWLS) threads the bilayer. 2 residues coordinate Zn(2+): His101 and Asp105. At 120-135 (SKSSTMRLTFGWYRAE) the chain is on the cytoplasmic side. Residues 136–156 (ILGALMSIITIWLVTGVLVYL) form a helical membrane-spanning segment. The Lumenal, vesicle segment spans residues 157 to 170 (AIERIIRPDYTIDG). Residues 171–191 (TVMLITSACALGANVVLALIL) traverse the membrane as a helical segment. Topologically, residues 192 to 223 (HQSGHGHSHAGGKHEHMASEYKPQTNASIRAA) are cytoplasmic. A helical membrane pass occupies residues 224 to 244 (FIHVIGDLFQSISVLISALII). Zn(2+)-binding residues include His226 and Asp230. At 245 to 251 (YFKPEYK) the chain is on the lumenal, vesicle side. Residues 252-272 (IADPICTFIFSIFVLITTVTV) traverse the membrane as a helical segment. The Cytoplasmic segment spans residues 273–375 (LRDLLNILME…ECMFCYEPTQ (103 aa)). 6 residues coordinate Zn(2+): His307, His324, His351, Glu358, Cys367, and Cys370.

Belongs to the cation diffusion facilitator (CDF) transporter (TC 2.A.4) family. SLC30A subfamily. In terms of assembly, homodimer.

It is found in the cytoplasmic vesicle. It localises to the secretory vesicle membrane. Its subcellular location is the cell membrane. It carries out the reaction Zn(2+)(in) + 2 H(+)(out) = Zn(2+)(out) + 2 H(+)(in). Proton-coupled zinc ion antiporter mediating the entry of zinc into the lumen of pancreatic beta cell secretory granules, thereby regulating insulin secretion. The protein is Proton-coupled zinc antiporter SLC30A8 (slc30a8) of Xenopus laevis (African clawed frog).